Reading from the N-terminus, the 361-residue chain is MSPECARAAGDAPLRSLEQANRTRFPFFSDVKGDHRLVLAAVETTVLVLIFAVSLLGNVCALVLVARRRRRGATACLVLNLFCADLLFISAIPLVLAVRWTEAWLLGPVACHLLFYVMTLSGSVTILTLAAVSLERMVCIVHLQRGVRGPGRRARAVLLALIWGYSAVAALPLCVFFRVVPQRLPGADQEISICTLIWPTIPGEISWDVSFVTLNFLVPGLVIVISYSKILQITKASRKRLTVSLAYSESHQIRVSQQDFRLFRTLFLLMVSFFIMWSPIIITILLILIQNFKQDLVIWPSLFFWVVAFTFANSALNPILYNMTLCRNEWKKIFCCFWFPEKGAILTDTSVKRNDLSIISG.

Topologically, residues 1–45 are extracellular; that stretch reads MSPECARAAGDAPLRSLEQANRTRFPFFSDVKGDHRLVLAAVETT. A glycan (N-linked (GlcNAc...) asparagine) is linked at N21. A helical transmembrane segment spans residues 46–66; that stretch reads VLVLIFAVSLLGNVCALVLVA. Residues 67–77 lie on the Cytoplasmic side of the membrane; the sequence is RRRRRGATACL. A helical membrane pass occupies residues 78 to 98; that stretch reads VLNLFCADLLFISAIPLVLAV. The Extracellular portion of the chain corresponds to 99–112; the sequence is RWTEAWLLGPVACH. C111 and C194 are oxidised to a cystine. A helical transmembrane segment spans residues 113–133; that stretch reads LLFYVMTLSGSVTILTLAAVS. At 134-156 the chain is on the cytoplasmic side; the sequence is LERMVCIVHLQRGVRGPGRRARA. The chain crosses the membrane as a helical span at residues 157 to 177; sequence VLLALIWGYSAVAALPLCVFF. The Extracellular segment spans residues 178 to 204; the sequence is RVVPQRLPGADQEISICTLIWPTIPGE. Residues 205–225 traverse the membrane as a helical segment; that stretch reads ISWDVSFVTLNFLVPGLVIVI. At 226-268 the chain is on the cytoplasmic side; the sequence is SYSKILQITKASRKRLTVSLAYSESHQIRVSQQDFRLFRTLFL. Residues 269-289 traverse the membrane as a helical segment; sequence LMVSFFIMWSPIIITILLILI. Residues 290–295 are Extracellular-facing; that stretch reads QNFKQD. Residues 296 to 316 traverse the membrane as a helical segment; the sequence is LVIWPSLFFWVVAFTFANSAL. Over 317–361 the chain is Cytoplasmic; the sequence is NPILYNMTLCRNEWKKIFCCFWFPEKGAILTDTSVKRNDLSIISG. 2 positions are modified to phosphothreonine: T347 and T349. Phosphoserine occurs at positions 350, 357, and 360.

The protein belongs to the G-protein coupled receptor 1 family. Interacts (via C-terminus) with ARRB2 following LCFAs stimulation. In terms of processing, phosphorylated at two clusters of Ser and Thr residues located in the intracellular C-terminus, a prerequisite for FFAR4 internalization via an ARRB2-dependent pathway. As to expression, the predominant isoform in human tissues. Expressed in adipose tissue, pancreatic islets, lung and brain. Expressed in alpha cells of pancreatic islets. Expressed in primary cilia of perivascular preadipocytes of white adipose tissue (at protein level). Abundant expression in the intestinal tract. Expressed in colonic intraepithelial neuroendocrine cells.

The protein localises to the cell membrane. The protein resides in the endosome membrane. Its subcellular location is the lysosome membrane. It is found in the cell projection. It localises to the cilium membrane. In terms of biological role, G-protein-coupled receptor for long-chain fatty acids (LCFAs) with a major role in adipogenesis, energy metabolism and inflammation. Signals via G-protein and beta-arrestin pathways. LCFAs sensing initiates activation of phosphoinositidase C-linked G proteins GNAQ and GNA11 (G(q)/G(11)), inducing a variety of cellular responses via second messenger pathways such as intracellular calcium mobilization, modulation of cyclic adenosine monophosphate (cAMP) production, and mitogen-activated protein kinases (MAPKs). After LCFAs binding, associates with beta-arrestin ARRB2 that acts as an adapter protein coupling the receptor to specific downstream signaling pathways, as well as mediating receptor endocytosis. In response to dietary fats, plays an important role in the regulation of adipocyte proliferation and differentiation. Acts as a receptor for omega-3 polyunsaturated fatty acids (PUFAs) at primary cilium of perivascular preadipocytes, initiating an adipogenic program via cAMP and CTCF-dependent chromatin remodeling that ultimately results in transcriptional activation of adipogenic genes and cell cycle entry. Induces differentiation of brown adipocytes probably via autocrine and endocrine functions of FGF21 hormone. Activates brown adipocytes by initiating intracellular calcium signaling that leads to mitochondrial depolarization and fission, and overall increased mitochondrial respiration. Consequently stimulates fatty acid uptake and oxidation in mitochondria together with UCP1-mediated thermogenic respiration, eventually reducing fat mass. Regulates bi-potential differentiation of bone marrow mesenchymal stem cells toward osteoblasts or adipocytes likely by up-regulating distinct integrins. In response to dietary fats regulates hormone secretion and appetite. Stimulates GIP and GLP1 secretion from enteroendocrine cells as well as GCG secretion in pancreatic alpha cells, thereby playing a role in the regulation of blood glucose levels. Negatively regulates glucose-induced SST secretion in pancreatic delta cells. Mediates LCFAs inhibition of GHRL secretion, an appetite-controlling hormone. In taste buds, contributes to sensing of dietary fatty acids by the gustatory system. During the inflammatory response, promotes anti-inflammatory M2 macrophage differentiation in adipose tissue. Mediates the anti-inflammatory effects of omega-3 PUFAs via inhibition of NLRP3 inflammasome activation. In this pathway, interacts with adapter protein ARRB2 and inhibits the priming step triggered by Toll-like receptors (TLRs) at the level of TAK1 and TAB1. Further inhibits the activation step when ARRB2 directly associates with NLRP3, leading to inhibition of pro-inflammatory cytokine release. Mediates LCFAs anti-apoptotic effects. Receptor for LCFAs decoupled from G-protein signaling. May signal through beta-arrestin pathway. After LCFAs binding, associates with beta-arrestin ARRB2 that may act as an adapter protein coupling the receptor to specific downstream signaling pathways, as well as mediating receptor endocytosis. This chain is Free fatty acid receptor 4, found in Homo sapiens (Human).